The primary structure comprises 207 residues: Dephospho-CoA kinase (207 aa).

The DPCK domain maps to 5–203; it reads AVGLTGGIAC…ARYRALASVF (199 aa). Residue 13-18 coordinates ATP; sequence ACGKSL.

This sequence belongs to the CoaE family.

It localises to the cytoplasm. It catalyses the reaction 3'-dephospho-CoA + ATP = ADP + CoA + H(+). It participates in cofactor biosynthesis; coenzyme A biosynthesis; CoA from (R)-pantothenate: step 5/5. Its function is as follows. Catalyzes the phosphorylation of the 3'-hydroxyl group of dephosphocoenzyme A to form coenzyme A. The sequence is that of Dephospho-CoA kinase from Xylella fastidiosa (strain 9a5c).